We begin with the raw amino-acid sequence, 119 residues long: MLSNIIPLSIGAALGATARWLLNLAVPAAMSPATGNLFANWTGALLIGIFAETINHPQWKLLLITGFLGSLTTLSGFSLETVTLLQSNRPASALANIFLHTAGSLLLTWLGLKIGAAVK.

The next 4 membrane-spanning stretches (helical) occupy residues 5-25 (IIPLSIGAALGATARWLLNLA), 34-54 (TGNLFANWTGALLIGIFAETI), 59-79 (WKLLLITGFLGSLTTLSGFSL), and 97-117 (IFLHTAGSLLLTWLGLKIGAA). The Na(+) site is built by Gly-69 and Thr-72.

This sequence belongs to the fluoride channel Fluc/FEX (TC 1.A.43) family.

The protein localises to the cell inner membrane. It catalyses the reaction fluoride(in) = fluoride(out). Na(+) is not transported, but it plays an essential structural role and its presence is essential for fluoride channel function. Its function is as follows. Fluoride-specific ion channel. Important for reducing fluoride concentration in the cell, thus reducing its toxicity. In Neisseria meningitidis serogroup C / serotype 2a (strain ATCC 700532 / DSM 15464 / FAM18), this protein is Fluoride-specific ion channel FluC.